A 96-amino-acid chain; its full sequence is Molybdopterin synthase sulfur carrier subunit (96 aa).

G96 is modified (1-thioglycine; alternate). G96 carries the post-translational modification Glycyl adenylate; alternate.

This sequence belongs to the MoaD family. MOCS2A subfamily. As to quaternary structure, heterotetramer; composed of 2 small (MOCS2A) and 2 large (MOCS2B) subunits. In terms of processing, C-terminal thiocarboxylation occurs in 2 steps, it is first acyl-adenylated (-COAMP) via the hesA/moeB/thiF part of UBA4, then thiocarboxylated (-COSH) via the rhodanese domain of UBA4.

The protein localises to the cytoplasm. It functions in the pathway cofactor biosynthesis; molybdopterin biosynthesis. Functionally, acts as a sulfur carrier required for molybdopterin biosynthesis. Component of the molybdopterin synthase complex that catalyzes the conversion of precursor Z into molybdopterin by mediating the incorporation of 2 sulfur atoms into precursor Z to generate a dithiolene group. In the complex, serves as sulfur donor by being thiocarboxylated (-COSH) at its C-terminus by UBA4. After interaction with MOCS2B, the sulfur is then transferred to precursor Z to form molybdopterin. This is Molybdopterin synthase sulfur carrier subunit from Phaeosphaeria nodorum (strain SN15 / ATCC MYA-4574 / FGSC 10173) (Glume blotch fungus).